We begin with the raw amino-acid sequence, 624 residues long: Actin-related protein 8 (624 aa).

Residue Met1 is modified to N-acetylmethionine. Basic and acidic residues predominate over residues 1–25; sequence MTQAEKGDTENGKEKGGEKEKEQRG. The disordered stretch occupies residues 1 to 29; that stretch reads MTQAEKGDTENGKEKGGEKEKEQRGVKRP. ATP contacts are provided by Ser55 and Thr56. Ser132 carries the phosphoserine modification. 283 to 286 contributes to the ATP binding site; sequence DVGD. Ser412 is subject to Phosphoserine. A disordered region spans residues 430 to 462; it reads SKQEQSAKATADRKSASKPIGFEGDLRGQSSDL.

Belongs to the actin family. ARP8 subfamily. As to quaternary structure, component of the chromatin remodeling INO80 complex; specifically part of a complex module associated with the DBINO domain of INO80. Interacts with ACTR5; the interaction is observed in asynchronous (interphase) cells but not in metaphase-arrested cells indicative for a possible dissociation of the INO80 complex in mitotic cells. Exists as monomers and dimers, but the dimer is most probably the biologically relevant form required for stable interactions with histones that exploits the twofold symmetry of the nucleosome core.

Its subcellular location is the nucleus. The protein localises to the chromosome. Plays an important role in the functional organization of mitotic chromosomes. Exhibits low basal ATPase activity, and unable to polymerize. In terms of biological role, proposed core component of the chromatin remodeling INO80 complex which is involved in transcriptional regulation, DNA replication and probably DNA repair. Required for the recruitment of INO80 (and probably the INO80 complex) to sites of DNA damage. Strongly prefer nucleosomes and H3-H4 tetramers over H2A-H2B dimers, suggesting it may act as a nucleosome recognition module within the complex. The protein is Actin-related protein 8 (ACTR8) of Homo sapiens (Human).